The chain runs to 188 residues: MLQLHPSDIKDIILQGGVIAYPTEAVYGLGCDPDNDTAILKLLAVKQRPWQKGLILVASDFQQLLAYVDESQLTAEQLEFAFSKWPGPFTFVMPIKAQVSKYLCGEFDSIAVRVSAHAGVQALCRALNKPLVSTSANLAGEDPALTAAEILADFTGKIDALVLGELGEQRQPSTIIDARSGKILRNGQ.

In terms of domain architecture, YrdC-like spans 3–188 (QLHPSDIKDI…RSGKILRNGQ (186 aa)).

This sequence belongs to the SUA5 family. TsaC subfamily.

It is found in the cytoplasm. It catalyses the reaction L-threonine + hydrogencarbonate + ATP = L-threonylcarbamoyladenylate + diphosphate + H2O. Functionally, required for the formation of a threonylcarbamoyl group on adenosine at position 37 (t(6)A37) in tRNAs that read codons beginning with adenine. Catalyzes the conversion of L-threonine, HCO(3)(-)/CO(2) and ATP to give threonylcarbamoyl-AMP (TC-AMP) as the acyladenylate intermediate, with the release of diphosphate. This chain is Threonylcarbamoyl-AMP synthase, found in Shewanella baltica (strain OS195).